The chain runs to 147 residues: Sec-independent protein translocase protein TatB (147 aa).

A helical membrane pass occupies residues 2–22 (FDGIGFMELLLIGVLGLVVLG). Polar residues predominate over residues 85–97 (QLKQAAQSVNRPY). A disordered region spans residues 85-147 (QLKQAAQSVN…DTRSNPKANG (63 aa)). Over residues 113–133 (ASQSVSTEASPSASSAPTSES) the composition is skewed to low complexity.

It belongs to the TatB family. As to quaternary structure, the Tat system comprises two distinct complexes: a TatABC complex, containing multiple copies of TatA, TatB and TatC subunits, and a separate TatA complex, containing only TatA subunits. Substrates initially bind to the TatABC complex, which probably triggers association of the separate TatA complex to form the active translocon.

The protein resides in the cell inner membrane. Part of the twin-arginine translocation (Tat) system that transports large folded proteins containing a characteristic twin-arginine motif in their signal peptide across membranes. Together with TatC, TatB is part of a receptor directly interacting with Tat signal peptides. TatB may form an oligomeric binding site that transiently accommodates folded Tat precursor proteins before their translocation. In Shewanella sp. (strain ANA-3), this protein is Sec-independent protein translocase protein TatB.